The following is a 180-amino-acid chain: Large ribosomal subunit protein uL5 (180 aa).

It belongs to the universal ribosomal protein uL5 family. Part of the 50S ribosomal subunit; part of the 5S rRNA/L5/L18/L25 subcomplex. Contacts the 5S rRNA and the P site tRNA. Forms a bridge to the 30S subunit in the 70S ribosome.

In terms of biological role, this is one of the proteins that bind and probably mediate the attachment of the 5S RNA into the large ribosomal subunit, where it forms part of the central protuberance. In the 70S ribosome it contacts protein S13 of the 30S subunit (bridge B1b), connecting the 2 subunits; this bridge is implicated in subunit movement. Contacts the P site tRNA; the 5S rRNA and some of its associated proteins might help stabilize positioning of ribosome-bound tRNAs. This chain is Large ribosomal subunit protein uL5, found in Streptococcus suis (strain 05ZYH33).